The following is a 292-amino-acid chain: Probable deoxyhypusine synthase (292 aa).

K267 functions as the Nucleophile in the catalytic mechanism.

Belongs to the deoxyhypusine synthase family. Requires NAD(+) as cofactor.

It carries out the reaction [eIF5A protein]-L-lysine + spermidine = [eIF5A protein]-deoxyhypusine + propane-1,3-diamine. The protein operates within protein modification; eIF5A hypusination. Its function is as follows. Catalyzes the NAD-dependent oxidative cleavage of spermidine and the subsequent transfer of the butylamine moiety of spermidine to the epsilon-amino group of a specific lysine residue of the eIF-5A precursor protein to form the intermediate deoxyhypusine residue. In Pyrobaculum aerophilum (strain ATCC 51768 / DSM 7523 / JCM 9630 / CIP 104966 / NBRC 100827 / IM2), this protein is Probable deoxyhypusine synthase (dys).